We begin with the raw amino-acid sequence, 163 residues long: Cytochrome c-type biogenesis protein CcmE (163 aa).

At 1–8 the chain is on the cytoplasmic side; that stretch reads MNPRRKKR. The chain crosses the membrane as a helical; Signal-anchor for type II membrane protein span at residues 9–29; it reads LTLAVALIVGVAGAASLLLYA. At 30–163 the chain is on the periplasmic side; the sequence is LNSNLNLFYT…QEGVEKTAQY (134 aa). Positions 131 and 135 each coordinate heme.

Belongs to the CcmE/CycJ family.

It is found in the cell inner membrane. In terms of biological role, heme chaperone required for the biogenesis of c-type cytochromes. Transiently binds heme delivered by CcmC and transfers the heme to apo-cytochromes in a process facilitated by CcmF and CcmH. The protein is Cytochrome c-type biogenesis protein CcmE of Shewanella denitrificans (strain OS217 / ATCC BAA-1090 / DSM 15013).